Reading from the N-terminus, the 445-residue chain is Cyclin-B1-2 (445 aa).

This sequence belongs to the cyclin family. Cyclin AB subfamily. In terms of assembly, interacts with FZR2/CCS52A1, FZR1/CCS52A2 and FZR3/CCS52B. In terms of tissue distribution, expressed in roots, stems and flowers.

In terms of biological role, may induce mitotic cell division. The polypeptide is Cyclin-B1-2 (CYCB1-2) (Arabidopsis thaliana (Mouse-ear cress)).